Here is a 318-residue protein sequence, read N- to C-terminus: L-lactate dehydrogenase (318 aa).

Residues Val18, Asp39, Lys44, Tyr69, and 83-84 (GA) each bind NAD(+). Residues Gln86 and Arg92 each contribute to the substrate site. NAD(+)-binding positions include Ser105, 122 to 124 (VSN), and Ser147. Substrate is bound at residue 124 to 127 (NPVD). Residue 152 to 155 (DTSR) participates in substrate binding. His179 functions as the Proton acceptor in the catalytic mechanism. Tyr225 carries the phosphotyrosine modification. Residue Thr234 coordinates substrate.

This sequence belongs to the LDH/MDH superfamily. LDH family. In terms of assembly, homotetramer.

The protein localises to the cytoplasm. The catalysed reaction is (S)-lactate + NAD(+) = pyruvate + NADH + H(+). It participates in fermentation; pyruvate fermentation to lactate; (S)-lactate from pyruvate: step 1/1. Its function is as follows. Catalyzes the conversion of lactate to pyruvate. This is L-lactate dehydrogenase from Clostridium botulinum (strain Langeland / NCTC 10281 / Type F).